The sequence spans 141 residues: Acetyltransferase ECA0875 (141 aa).

The 141-residue stretch at 1–141 (MEIRIFRQDD…GKRLIEDREY (141 aa)) folds into the N-acetyltransferase domain.

The protein belongs to the acetyltransferase family. YpeA subfamily.

This Pectobacterium atrosepticum (strain SCRI 1043 / ATCC BAA-672) (Erwinia carotovora subsp. atroseptica) protein is Acetyltransferase ECA0875.